The sequence spans 332 residues: MKINLDRTSSGFCIGVQGTIHVAEEKLNQSGELYCLGDVVHNEVEVKRLEALGMETIDIPAFEELRDAEVLIRAHGEPPSTYETARRNNLAITDTTCPVVAKLQKTAKMLHQLGYQVIIYGKKIHPEVIGINGQCNDEGVVIKHPDLSDEAEIAPLDLGRKTALISQTTMDVPGFYELKKNLEKLFAEHGHRNPGTKSGEWMAVRDIDITSEKTGGRAMPELVYKDTICRQVSSRNGKLRDFALANDCIVFAAGRKSSNGQVLYSICKDANPHSYFIEDVDEIQPEWFVGENGKPVESVGICGATSTPMWLLEKVANYIGKTFGDDSGNPDA.

C13 lines the [4Fe-4S] cluster pocket. H41 and H75 together coordinate (2E)-4-hydroxy-3-methylbut-2-enyl diphosphate. Dimethylallyl diphosphate-binding residues include H41 and H75. The isopentenyl diphosphate site is built by H41 and H75. Position 97 (C97) interacts with [4Fe-4S] cluster. Residue H125 coordinates (2E)-4-hydroxy-3-methylbut-2-enyl diphosphate. H125 serves as a coordination point for dimethylallyl diphosphate. Position 125 (H125) interacts with isopentenyl diphosphate. The Proton donor role is filled by E127. T168 serves as a coordination point for (2E)-4-hydroxy-3-methylbut-2-enyl diphosphate. Position 229 (C229) interacts with [4Fe-4S] cluster. (2E)-4-hydroxy-3-methylbut-2-enyl diphosphate contacts are provided by S257, S258, N259, and S306. Positions 257, 258, 259, and 306 each coordinate dimethylallyl diphosphate. S257, S258, N259, and S306 together coordinate isopentenyl diphosphate.

It belongs to the IspH family. It depends on [4Fe-4S] cluster as a cofactor.

It carries out the reaction isopentenyl diphosphate + 2 oxidized [2Fe-2S]-[ferredoxin] + H2O = (2E)-4-hydroxy-3-methylbut-2-enyl diphosphate + 2 reduced [2Fe-2S]-[ferredoxin] + 2 H(+). The enzyme catalyses dimethylallyl diphosphate + 2 oxidized [2Fe-2S]-[ferredoxin] + H2O = (2E)-4-hydroxy-3-methylbut-2-enyl diphosphate + 2 reduced [2Fe-2S]-[ferredoxin] + 2 H(+). It functions in the pathway isoprenoid biosynthesis; dimethylallyl diphosphate biosynthesis; dimethylallyl diphosphate from (2E)-4-hydroxy-3-methylbutenyl diphosphate: step 1/1. It participates in isoprenoid biosynthesis; isopentenyl diphosphate biosynthesis via DXP pathway; isopentenyl diphosphate from 1-deoxy-D-xylulose 5-phosphate: step 6/6. Its function is as follows. Catalyzes the conversion of 1-hydroxy-2-methyl-2-(E)-butenyl 4-diphosphate (HMBPP) into a mixture of isopentenyl diphosphate (IPP) and dimethylallyl diphosphate (DMAPP). Acts in the terminal step of the DOXP/MEP pathway for isoprenoid precursor biosynthesis. The protein is 4-hydroxy-3-methylbut-2-enyl diphosphate reductase of Chlorobaculum parvum (strain DSM 263 / NCIMB 8327) (Chlorobium vibrioforme subsp. thiosulfatophilum).